Here is a 425-residue protein sequence, read N- to C-terminus: MKKFPEGFLWGVATASYQIEGSPLADGAGMSIWHTFSHTPGNVKNGDTGDVACDHYNRWKEDIEIIEKIGAKAYRFSISWPRILPEGTGKVNQKGLDFYNRIIDTLLEKNITPFITIYHWDLPFSLQLKGGWANRDIADWFAEYSRVLFENFGDRVKHWITLNEPWVVAIVGHLYGVHAPGMKDIYVAFHTVHNLLRAHAKSVKVFRETVKDGKIGIVFNNGYFEPASEREEDIRAARFMHQFNNYPLFLNPIYRGEYPDLVLEFAREYLPRNYEDDMEEIKQEIDFVGLNYYSGHMVKYDPNSPARVSFVERNLPKTAMGWEIVPEGIYWILKGVKEEYNPQEVYITENGAAFDDVVSEGGKVHDQNRIDYLRAHIEQVWRAIQDGVPLKGYFVWSLLDNFEWAEGYSKRFGIVYVDYNTQKRI.

E164 functions as the Proton donor in the catalytic mechanism. The active-site Nucleophile is E349.

It belongs to the glycosyl hydrolase 1 family. In terms of assembly, monomer.

It catalyses the reaction Hydrolysis of (1-&gt;4)-linkages in (1-&gt;4)-beta-D-glucans, to remove successive glucose units.. The enzyme catalyses Hydrolysis of terminal, non-reducing beta-D-glucosyl residues with release of beta-D-glucose.. Its pathway is glycan metabolism; cellulose degradation. It participates in glycan metabolism; beta-D-glucan degradation. Functionally, broad substrate specificity glycosidase. Releases glucose from soluble glucooligomers, with a preference for longer oligomers; acts more readily on cellotetraose than on cellobiose. Displays similar activities towards the disaccharides lactose and cellobiose. Is also able to hydrolyze various aryl-beta-glycosides in vitro. The protein is 1,4-beta-D-glucan glucohydrolase (bglA) of Thermotoga neapolitana.